We begin with the raw amino-acid sequence, 249 residues long: 2,3-bisphosphoglycerate-dependent phosphoglycerate mutase (249 aa).

Substrate-binding positions include 9 to 16 (RHGQSQWN), 22 to 23 (TG), Arg-61, 88 to 91 (ERHY), Lys-99, 115 to 116 (RR), and 184 to 185 (GN). The Tele-phosphohistidine intermediate role is filled by His-10. Glu-88 serves as the catalytic Proton donor/acceptor.

The protein belongs to the phosphoglycerate mutase family. BPG-dependent PGAM subfamily. In terms of assembly, homodimer.

It catalyses the reaction (2R)-2-phosphoglycerate = (2R)-3-phosphoglycerate. It functions in the pathway carbohydrate degradation; glycolysis; pyruvate from D-glyceraldehyde 3-phosphate: step 3/5. In terms of biological role, catalyzes the interconversion of 2-phosphoglycerate and 3-phosphoglycerate. The protein is 2,3-bisphosphoglycerate-dependent phosphoglycerate mutase of Xylella fastidiosa (strain M12).